The sequence spans 189 residues: Large ribosomal subunit protein uL6 (189 aa).

Belongs to the universal ribosomal protein uL6 family. As to quaternary structure, part of the 50S ribosomal subunit.

This protein binds to the 23S rRNA, and is important in its secondary structure. It is located near the subunit interface in the base of the L7/L12 stalk, and near the tRNA binding site of the peptidyltransferase center. The chain is Large ribosomal subunit protein uL6 from Microcystis aeruginosa (strain NIES-843 / IAM M-2473).